Consider the following 503-residue polypeptide: Cobyric acid synthase (503 aa).

The 190-residue stretch at 255–444 folds into the GATase cobBQ-type domain; the sequence is DIDIAVIRYP…FHDLFHNDAF (190 aa). Cysteine 337 serves as the catalytic Nucleophile. Residue histidine 436 is part of the active site.

It belongs to the CobB/CobQ family. CobQ subfamily.

Its pathway is cofactor biosynthesis; adenosylcobalamin biosynthesis. Its function is as follows. Catalyzes amidations at positions B, D, E, and G on adenosylcobyrinic A,C-diamide. NH(2) groups are provided by glutamine, and one molecule of ATP is hydrogenolyzed for each amidation. The sequence is that of Cobyric acid synthase from Geobacillus sp. (strain WCH70).